The primary structure comprises 885 residues: Cadherin-1 (885 aa).

The first 26 residues, 1 to 26 (MGPRYGGAPALLLPLLLLLQVSSGLC), serve as a signal peptide directing secretion. Positions 27 to 156 (QEPEPCRPGF…SQHGLRRQKR (130 aa)) are excised as a propeptide. The segment covering 121–131 (KAATHHHHHHH) has biased composition (basic residues). Positions 121 to 141 (KAATHHHHHHHDAPSKTQTEV) are disordered. Residues 157–712 (DWVIPPISCP…YAEAGLQVPA (556 aa)) lie on the Extracellular side of the membrane. 5 consecutive Cadherin domains span residues 158–264 (WVIP…KPEF), 265–377 (TQAV…PPIF), 378–488 (NPTT…APIF), 489–597 (IPCP…GPIP), and 607–688 (KNPQ…VFVC). Aspartate 259 contacts Ca(2+). The O-linked (Man...) serine glycan is linked to serine 282. O-linked (Man...) threonine glycosylation is present at threonine 287. Position 290 (aspartate 290) interacts with Ca(2+). O-linked (Man...) threonine glycosylation is found at threonine 360, threonine 472, threonine 474, and threonine 511. A glycan (N-linked (GlcNAc...) asparagine) is linked at asparagine 560. Threonine 578, threonine 580, and threonine 582 each carry an O-linked (Man...) threonine glycan. The N-linked (GlcNAc...) asparagine glycan is linked to asparagine 639. The chain crosses the membrane as a helical span at residues 713 to 733 (ILGILGGILALLILILLLLLF). The Cytoplasmic segment spans residues 734–885 (VRRRRVVKEP…ADMYGGGEDD (152 aa)). A disordered region spans residues 750-770 (DTRDNVYYYDEEGGGEEDQDF). Residues tyrosine 756, tyrosine 757, and tyrosine 758 each carry the phosphotyrosine; by SRC modification. Residues 758 to 770 (YDEEGGGEEDQDF) are compositionally biased toward acidic residues. Positions 761-772 (EGGGEEDQDFDL) are required for binding CTNND1 and PSEN1. 5 positions are modified to phosphoserine: serine 773, serine 796, serine 841, serine 843, and serine 849. Residues 792–811 (PTLLSVPQYRPRPANPDEIG) are disordered. Positions 814 to 885 (IDENLKAADT…ADMYGGGEDD (72 aa)) are required for binding alpha, beta and gamma catenins.

As to quaternary structure, homodimer; disulfide-linked. Component of an E-cadherin/ catenin adhesion complex composed of at least E-cadherin/CDH1, beta-catenin/CTNNB1 or gamma-catenin/JUP, and potentially alpha-catenin/CTNNA1; the complex is located to adherens junctions. Found in a complex composed of CDH1, RAP1A and PKP3; PKP3 acts as a scaffold protein within the complex, the complex is required for CDH1 localization to mature desmosome cell junctions. Interacts with the TRPV4 and CTNNB1 complex. Interacts with CTNND1. The stable association of CTNNA1 is controversial as CTNNA1 was shown not to bind to F-actin when assembled in the complex. Alternatively, the CTNNA1-containing complex may be linked to F-actin by other proteins such as LIMA1. Interaction with PSEN1, cleaves CDH1 resulting in the disassociation of cadherin-based adherens junctions (CAJs). Interacts with AJAP1 and DLGAP5. Interacts with TBC1D2. Interacts with LIMA1. Interacts with CAV1. Interacts with PIP5K1C. Interacts with RAB8B. Interacts with DDR1; this stabilizes CDH1 at the cell surface and inhibits its internalization. Interacts with RAPGEF2. Interacts with KLRG1. Forms a ternary complex composed of ADAM10, CADH1 and EPHA4; within the complex, CADH1 is cleaved by ADAM10 which disrupts adherens junctions. Interacts with SPEF1. Interacts with CTNNB1 and PKP2. Interacts with AMOTL2; the interaction may facilitate binding of radial actin fibers to cell junction complexes. Interacts with DSG3; the interaction is required for CDH1 localization to developing adherens junctions. During apoptosis or with calcium influx, cleaved by a membrane-bound metalloproteinase (ADAM10), PS1/gamma-secretase and caspase-3. Processing by the metalloproteinase, induced by calcium influx, causes disruption of cell-cell adhesion and the subsequent release of beta-catenin into the cytoplasm. The residual membrane-tethered cleavage product is rapidly degraded via an intracellular proteolytic pathway. Cleavage by caspase-3 releases the cytoplasmic tail resulting in disintegration of the actin microfilament system. The gamma-secretase-mediated cleavage promotes disassembly of adherens junctions. During development of the cochlear organ of Corti, cleavage by ADAM10 at adherens junctions promotes pillar cell separation. Post-translationally, N-glycosylation at Asn-639 is essential for expression, folding and trafficking. Addition of bisecting N-acetylglucosamine by MGAT3 modulates its cell membrane location. In terms of processing, ubiquitinated by a SCF complex containing SKP2, which requires prior phosphorylation by CK1/CSNK1A1. Ubiquitinated by CBLL1/HAKAI, requires prior phosphorylation at Tyr-757. O-glycosylated. O-manosylated by TMTC1, TMTC2, TMTC3 or TMTC4. Thr-287 and Thr-511 are O-mannosylated by TMTC2 or TMTC4 but not TMTC1 or TMTC3.

The protein localises to the cell junction. The protein resides in the adherens junction. It localises to the cell membrane. It is found in the endosome. Its subcellular location is the golgi apparatus. The protein localises to the trans-Golgi network. The protein resides in the cytoplasm. It localises to the desmosome. Cadherins are calcium-dependent cell adhesion proteins. They preferentially interact with themselves in a homophilic manner in connecting cells; cadherins may thus contribute to the sorting of heterogeneous cell types. CDH1 is involved in mechanisms regulating cell-cell adhesions, mobility and proliferation of epithelial cells. Promotes organization of radial actin fiber structure and cellular response to contractile forces, via its interaction with AMOTL2 which facilitates anchoring of radial actin fibers to CDH1 junction complexes at the cell membrane. Plays a role in the early stages of desmosome cell-cell junction formation via facilitating the recruitment of DSG2 and DSP to desmosome plaques. Has a potent invasive suppressor role. It is a ligand for integrin alpha-E/beta-7. Functionally, E-Cad/CTF2 promotes non-amyloidogenic degradation of Abeta precursors. Has a strong inhibitory effect on APP C99 and C83 production. This chain is Cadherin-1 (CDH1), found in Canis lupus familiaris (Dog).